We begin with the raw amino-acid sequence, 200 residues long: Dephospho-CoA kinase (200 aa).

One can recognise a DPCK domain in the interval 3 to 200 (VLGLTGSIGM…LSGKPAAATR (198 aa)). 11–16 (GMGKTT) serves as a coordination point for ATP.

This sequence belongs to the CoaE family.

The protein resides in the cytoplasm. The enzyme catalyses 3'-dephospho-CoA + ATP = ADP + CoA + H(+). It participates in cofactor biosynthesis; coenzyme A biosynthesis; CoA from (R)-pantothenate: step 5/5. Functionally, catalyzes the phosphorylation of the 3'-hydroxyl group of dephosphocoenzyme A to form coenzyme A. This is Dephospho-CoA kinase from Brucella melitensis biotype 1 (strain ATCC 23456 / CCUG 17765 / NCTC 10094 / 16M).